The chain runs to 882 residues: Valine--tRNA ligase (882 aa).

The short motif at 45-55 (PNVTGSLHIGH) is the 'HIGH' region element. Positions 525–529 (KFSKS) match the 'KMSKS' region motif. Lys528 is a binding site for ATP. Residues 812 to 881 (EGLIDVAKEK…VLKKGIQNLA (70 aa)) are a coiled coil.

This sequence belongs to the class-I aminoacyl-tRNA synthetase family. ValS type 1 subfamily. In terms of assembly, monomer.

It is found in the cytoplasm. It carries out the reaction tRNA(Val) + L-valine + ATP = L-valyl-tRNA(Val) + AMP + diphosphate. Its function is as follows. Catalyzes the attachment of valine to tRNA(Val). As ValRS can inadvertently accommodate and process structurally similar amino acids such as threonine, to avoid such errors, it has a 'posttransfer' editing activity that hydrolyzes mischarged Thr-tRNA(Val) in a tRNA-dependent manner. The chain is Valine--tRNA ligase from Leptospira interrogans serogroup Icterohaemorrhagiae serovar Lai (strain 56601).